A 56-amino-acid chain; its full sequence is Small ribosomal subunit protein uS14 (56 aa).

Cysteine 21, cysteine 24, cysteine 39, and cysteine 42 together coordinate Zn(2+).

This sequence belongs to the universal ribosomal protein uS14 family. Zinc-binding uS14 subfamily. Part of the 30S ribosomal subunit. The cofactor is Zn(2+).

Its function is as follows. Binds 16S rRNA, required for the assembly of 30S particles. The chain is Small ribosomal subunit protein uS14 from Pyrococcus furiosus (strain ATCC 43587 / DSM 3638 / JCM 8422 / Vc1).